We begin with the raw amino-acid sequence, 399 residues long: Elongation factor Tu (399 aa).

In terms of domain architecture, tr-type G spans 10–209 (KPHVNIGTIG…AVDEYIPTPE (200 aa)). A G1 region spans residues 19–26 (GHVDHGKT). 19 to 26 (GHVDHGKT) contributes to the GTP binding site. Threonine 26 is a Mg(2+) binding site. Positions 60-64 (GITIA) are G2. Positions 81-84 (DCPG) are G3. GTP contacts are provided by residues 81 to 85 (DCPGH) and 136 to 139 (NKED). The segment at 136–139 (NKED) is G4. The interval 174 to 176 (SAL) is G5.

Belongs to the TRAFAC class translation factor GTPase superfamily. Classic translation factor GTPase family. EF-Tu/EF-1A subfamily. Monomer.

Its subcellular location is the cytoplasm. The enzyme catalyses GTP + H2O = GDP + phosphate + H(+). Functionally, GTP hydrolase that promotes the GTP-dependent binding of aminoacyl-tRNA to the A-site of ribosomes during protein biosynthesis. In Nitratiruptor sp. (strain SB155-2), this protein is Elongation factor Tu.